We begin with the raw amino-acid sequence, 888 residues long: G-protein coupled receptor family C group 6 member A (888 aa).

The signal sequence occupies residues 1–15 (MALLMTCFVIVFAAS). Over 16–568 (QPCQTPDDLV…KEMEYLDSLA (553 aa)) the chain is Extracellular. N-linked (GlcNAc...) asparagine glycans are attached at residues asparagine 251, asparagine 322, asparagine 532, and asparagine 544. A helical membrane pass occupies residues 569-589 (ILLLALSLLGILFVLAIGIIF). Over 590–604 (TRNLNTPVVKSSGEL) the chain is Cytoplasmic. The helical transmembrane segment at 605-625 (MVRYVILFCHFLNFAGTGFFI) threads the bilayer. Topologically, residues 626 to 641 (REPQSFTCKTRQTLIC) are extracellular. A helical membrane pass occupies residues 642–662 (MSFTLCISYILMKSLKILLAF). The Cytoplasmic segment spans residues 663-676 (SSKLQNFLKCFYKP). Residues 677 to 697 (IPIIFTCTGIVVVCTLLIFAA) form a helical membrane-spanning segment. Over 698 to 718 (PAVGQNVSLPRVIIFECEEGS) the chain is Extracellular. A helical transmembrane segment spans residues 719–739 (ILAFGSMLGYAAILAFMCFIC). Over 740–754 (AFKGRKFPENYNEAK) the chain is Cytoplasmic. A helical transmembrane segment spans residues 755–775 (FITFGMLIYFIAWITFIPIYT). The Extracellular portion of the chain corresponds to 776–779 (FGKY). The chain crosses the membrane as a helical span at residues 780–800 (MLVVEIIIILISNYGICCMFF). Residues 801-888 (PKCYVILSKQ…ALPPKRISSI (88 aa)) are Cytoplasmic-facing.

It belongs to the G-protein coupled receptor 3 family. Homodimer; disulfide-linked.

The protein resides in the cell membrane. Receptor activated by multiple ligands, including osteocalcin (BGLAP), basic amino acids, and various cations. Activated by amino acids with a preference for basic amino acids such as L-Lys, L-Arg and L-ornithine but also by small and polar amino acids. The L-alpha amino acids respond is augmented by divalent cations Ca(2+) and Mg(2+). Seems to act through a G(q)/G(11) and G(i)-coupled pathway. Regulates testosterone production by acting as a ligand for uncarboxylated osteocalcin hormone: osteocalcin-binding at the surface of Leydig cells initiates a signaling response that promotes the expression of enzymes required for testosterone synthesis in a CREB-dependent manner. Mediates the non-genomic effects of androgens in multiple tissue. May coordinate nutritional and hormonal anabolic signals through the sensing of extracellular amino acids, osteocalcin, divalent ions and its responsiveness to anabolic steroids. The protein is G-protein coupled receptor family C group 6 member A (GPRC6A) of Bos taurus (Bovine).